Here is a 1188-residue protein sequence, read N- to C-terminus: Integrin alpha-11 (1188 aa).

An N-terminal signal peptide occupies residues 1–22 (MDFPRGLLVAWTLSLWPGFTDT). Residues 23-1141 (FNMDTRNPRV…ISKQEDWQVP (1119 aa)) are Extracellular-facing. FG-GAP repeat units lie at residues 24–85 (NMDT…NCTK) and 91–151 (VTLS…FSKT). Cys-76 and Cys-83 are disulfide-bonded. Asn-82 and Asn-95 each carry an N-linked (GlcNAc...) asparagine glycan. Cystine bridges form between Cys-121–Cys-139 and Cys-129–Cys-159. A VWFA domain is found at 164–345 (DIVIVLDGSN…AALKDIVDAL (182 aa)). N-linked (GlcNAc...) asparagine glycans are attached at residues Asn-291, Asn-331, Asn-358, Asn-449, and Asn-462. 5 FG-GAP repeats span residues 355–406 (TNKN…VIPH), 411–461 (LKEF…SMHN), 462–527 (NRSL…RFVY), 528–586 (NGTL…NILK), and 590–650 (QRIT…FEPS). 4 residues coordinate Ca(2+): Asp-488, Asn-490, Asp-492, and Asp-496. N-linked (GlcNAc...) asparagine glycosylation occurs at Asn-528. Residues Asp-551, Asn-553, Asp-555, Asp-559, Asp-613, Asn-615, Asp-617, and Asp-621 each coordinate Ca(2+). N-linked (GlcNAc...) asparagine glycosylation is present at Asn-642. Intrachain disulfides connect Cys-659/Cys-668, Cys-674/Cys-729, and Cys-781/Cys-787. N-linked (GlcNAc...) asparagine glycosylation occurs at Asn-694. Residue Asn-857 is glycosylated (N-linked (GlcNAc...) asparagine). A disulfide bridge connects residues Cys-881 and Cys-893. N-linked (GlcNAc...) asparagine glycosylation is found at Asn-894, Asn-973, Asn-1031, Asn-1039, and Asn-1059. The chain crosses the membrane as a helical span at residues 1142–1164 (IWIIVGSTLGGLLLLALLVLALW). At 1165–1188 (KLGFFKSAKRKREPGLGPIPKELK) the chain is on the cytoplasmic side.

This sequence belongs to the integrin alpha chain family. Heterodimer of an alpha and a beta subunit. Alpha-11 associates with beta-1. Interacts with RAB21.

It is found in the membrane. Functionally, integrin alpha-11/beta-1 is a receptor for collagen. This Mus musculus (Mouse) protein is Integrin alpha-11 (Itga11).